A 197-amino-acid polypeptide reads, in one-letter code: Protein GrpE (197 aa).

Over residues 1 to 27 (MTKQEKAENQEKPTEETVEETPKKETP) the composition is skewed to basic and acidic residues. A disordered region spans residues 1–50 (MTKQEKAENQEKPTEETVEETPKKETPFEPVMEADEVEETTEAQAPVEEA). Residues 32–41 (MEADEVEETT) are compositionally biased toward acidic residues.

This sequence belongs to the GrpE family. Homodimer.

It localises to the cytoplasm. Its function is as follows. Participates actively in the response to hyperosmotic and heat shock by preventing the aggregation of stress-denatured proteins, in association with DnaK and GrpE. It is the nucleotide exchange factor for DnaK and may function as a thermosensor. Unfolded proteins bind initially to DnaJ; upon interaction with the DnaJ-bound protein, DnaK hydrolyzes its bound ATP, resulting in the formation of a stable complex. GrpE releases ADP from DnaK; ATP binding to DnaK triggers the release of the substrate protein, thus completing the reaction cycle. Several rounds of ATP-dependent interactions between DnaJ, DnaK and GrpE are required for fully efficient folding. This is Protein GrpE from Latilactobacillus sakei (Lactobacillus sakei).